The primary structure comprises 141 residues: MAKKVIKLVKLQIPAGKANPAPPVGPALGQAGVNIMGFCKEFNARTQDQAGMIIPVEITVFEDRSFTFITKTPPAAVLLKKAAGIESGSGEPNKNKVASVKRDQVKEIAETKMPDLNAADVDAAMRMVEGTARSMGITIED.

Belongs to the universal ribosomal protein uL11 family. Part of the ribosomal stalk of the 50S ribosomal subunit. Interacts with L10 and the large rRNA to form the base of the stalk. L10 forms an elongated spine to which L12 dimers bind in a sequential fashion forming a multimeric L10(L12)X complex. Post-translationally, one or more lysine residues are methylated.

Functionally, forms part of the ribosomal stalk which helps the ribosome interact with GTP-bound translation factors. This is Large ribosomal subunit protein uL11 from Oceanobacillus iheyensis (strain DSM 14371 / CIP 107618 / JCM 11309 / KCTC 3954 / HTE831).